A 358-amino-acid chain; its full sequence is CCAAT/enhancer-binding protein alpha (358 aa).

Residues 1–55 are disordered; it reads MESADFYEAEPRPPMSSHLQSPPHAPSNAAFGFPRGAGPAPPPAPPAAPEPLGGI. The segment at 1–70 is required to repress E2F1:TFDP1-mediated transcription, to inhibit cell cycle and to induce adipocyte differentiation; sequence MESADFYEAE…SIDISAYIDP (70 aa). Residues 29 to 38 are compositionally biased toward low complexity; that stretch reads AAFGFPRGAG. The segment covering 39 to 49 has biased composition (pro residues); sequence PAPPPAPPAAP. Residues 54–72 form a required for interaction with TRIB1 region; sequence GICEHETSIDISAYIDPAA. The required to induce adipocyte differentiation stretch occupies residues 126 to 200; sequence PPGYGCAAAG…HASPAHLAAP (75 aa). Lys-159 is subject to N6-acetyllysine; alternate. Lys-159 is covalently cross-linked (Glycyl lysine isopeptide (Lys-Gly) (interchain with G-Cter in SUMO); alternate). Lys-159 is covalently cross-linked (Glycyl lysine isopeptide (Lys-Gly) (interchain with G-Cter in SUMO2); alternate). Disordered stretches follow at residues 176-195 and 213-310; these read LFPYQPPPPPPPPHPHASPA and TMHL…NVET. Pro residues predominate over residues 179 to 191; it reads YQPPPPPPPPHPH. A required to functionally cooperate with SREBF1 in promoter activation region spans residues 180–194; sequence QPPPPPPPPHPHASP. Ser-193 bears the Phosphoserine mark. The span at 220-234 shows a compositional bias: pro residues; the sequence is HPTPPPTPVPSPHPA. Phosphothreonine; by GSK3 occurs at positions 222 and 226. Ser-230 bears the Phosphoserine; by GSK3 mark. An interaction with FOXO1 region spans residues 240-358; sequence AGLPGPGGSL…SLVKAMGNCA (119 aa). Residues 261 to 271 are compositionally biased toward gly residues; sequence TGGGGGGGAGA. A compositionally biased stretch (basic and acidic residues) spans 276 to 292; the sequence is KSVDKNSNEYRVRRERN. The region spanning 282–345 is the bZIP domain; sequence SNEYRVRRER…DTLRGIFRQL (64 aa). Residues 285 to 300 mediate DNA binding; sequence YRVRRERNNIAVRKSR. The segment at 286 to 313 is basic motif; that stretch reads RVRRERNNIAVRKSRDKAKQRNVETQQK. Positions 317-345 are leucine-zipper; sequence LTSDNDRLRKRVEQLSRELDTLRGIFRQL.

Belongs to the bZIP family. C/EBP subfamily. Binds DNA as a homodimer and as a heterodimer. Can form stable heterodimers with CEBPB, CEBPD, CEBPE and CEBPG. Can form stable homodimers (also isoform 2 and isoform 3 dimers) and heterodimers with CEBPB (with isoform 2 and isoform 3) and CEBPG. Interacts with PRDM16. Interacts with UBN1. Interacts with ZNF638; this interaction increases transcriptional activation. Interacts with the complex TFDP2:E2F1; the interaction prevents CEBPA binding to target gene promoters and represses its transcriptional activity. Interacts with RB1. Interacts (when phosphorylated at Ser-193) with CDK2, CDK4, E2F4 and SMARCA2. Interacts with SREBPF1. Interacts with FOXO1 (via the Fork-head domain); the interaction increases when FOXO1 is deacetylated. Interacts with SIX1. Interacts (via recognition sequence) with TRIB1. In terms of assembly, interacts with TAF1A and UBTF. As to quaternary structure, interacts with NPM1. Sumoylated, sumoylation blocks the inhibitory effect on cell proliferation by disrupting the interaction with SMARCA2. Post-translationally, phosphorylation at Ser-193 is required for interaction with CDK2, CDK4 and SWI/SNF complex leading to cell cycle inhibition. Dephosphorylated at Ser-193 by protein phosphatase 2A (PP2A) through PI3K/AKT signaling pathway regulation. Phosphorylation at Thr-222 and Thr-226 by GSK3 is constitutive in adipose tissue and lung. In liver, both Thr-222 and Thr-226 are phosphorylated only during feeding but not during fasting. Phosphorylation of the GSK3 consensus sites selectively decreases transactivation activity on IRE-controlled promoters. In terms of processing, ubiquitinated by COP1 upon interaction with TRIB1. Isoform 2 and isoform 3 are expressed in liver (at protein level).

The protein localises to the nucleus. It localises to the nucleolus. In terms of biological role, transcription factor that coordinates proliferation arrest and the differentiation of myeloid progenitors, adipocytes, hepatocytes, and cells of the lung and the placenta. Binds directly to the consensus DNA sequence 5'-T[TG]NNGNAA[TG]-3' acting as an activator on distinct target genes. During early embryogenesis, plays essential and redundant functions with CEBPB. Essential for the transition from common myeloid progenitors (CMP) to granulocyte/monocyte progenitors (GMP). Critical for the proper development of the liver and the lung. Necessary for terminal adipocyte differentiation, is required for postnatal maintenance of systemic energy homeostasis and lipid storage. To regulate these different processes at the proper moment and tissue, interplays with other transcription factors and modulators. Down-regulates the expression of genes that maintain cells in an undifferentiated and proliferative state through E2F1 repression, which is critical for its ability to induce adipocyte and granulocyte terminal differentiation. Reciprocally E2F1 blocks adipocyte differentiation by binding to specific promoters and repressing CEBPA binding to its target gene promoters. Proliferation arrest also depends on a functional binding to SWI/SNF complex. In liver, regulates gluconeogenesis and lipogenesis through different mechanisms. To regulate gluconeogenesis, functionally cooperates with FOXO1 binding to IRE-controlled promoters and regulating the expression of target genes such as PCK1 or G6PC1. To modulate lipogenesis, interacts and transcriptionally synergizes with SREBF1 in promoter activation of specific lipogenic target genes such as ACAS2. In adipose tissue, seems to act as FOXO1 coactivator accessing to ADIPOQ promoter through FOXO1 binding sites. Can act as dominant-negative. Binds DNA and have transctivation activity, even if much less efficiently than isoform 2. Does not inhibit cell proliferation. Its function is as follows. Directly and specifically enhances ribosomal DNA transcription interacting with RNA polymerase I-specific cofactors and inducing histone acetylation. This is CCAAT/enhancer-binding protein alpha from Rattus norvegicus (Rat).